We begin with the raw amino-acid sequence, 430 residues long: Enolase (430 aa).

Residue Q163 coordinates (2R)-2-phosphoglycerate. The active-site Proton donor is the E205. D242, E287, and D314 together coordinate Mg(2+). The (2R)-2-phosphoglycerate site is built by K339, R368, S369, and K390. The active-site Proton acceptor is the K339.

This sequence belongs to the enolase family. Mg(2+) is required as a cofactor.

The protein resides in the cytoplasm. The protein localises to the secreted. It localises to the cell surface. The catalysed reaction is (2R)-2-phosphoglycerate = phosphoenolpyruvate + H2O. The protein operates within carbohydrate degradation; glycolysis; pyruvate from D-glyceraldehyde 3-phosphate: step 4/5. In terms of biological role, catalyzes the reversible conversion of 2-phosphoglycerate (2-PG) into phosphoenolpyruvate (PEP). It is essential for the degradation of carbohydrates via glycolysis. The polypeptide is Enolase (Geobacillus sp. (strain WCH70)).